The sequence spans 63 residues: Large ribosomal subunit protein uL29 (63 aa).

Belongs to the universal ribosomal protein uL29 family.

The sequence is that of Large ribosomal subunit protein uL29 (rpmC) from Buchnera aphidicola subsp. Acyrthosiphon kondoi (Acyrthosiphon kondoi symbiotic bacterium).